A 156-amino-acid chain; its full sequence is Ecotin (156 aa).

A signal peptide spans 1 to 19; it reads MKALLIAAGVAALSSTAMA. An intrachain disulfide couples Cys65 to Cys102.

This sequence belongs to the protease inhibitor I11 (ecotin) family. Homodimer.

The protein localises to the periplasm. Its function is as follows. General inhibitor of family S1 serine proteases. The protein is Ecotin of Pseudomonas aeruginosa (strain ATCC 15692 / DSM 22644 / CIP 104116 / JCM 14847 / LMG 12228 / 1C / PRS 101 / PAO1).